Consider the following 236-residue polypeptide: Flagellar L-ring protein (236 aa).

A signal peptide spans 1-16 (MRMQLTAVLAASLLAG). The N-palmitoyl cysteine moiety is linked to residue C17. C17 carries the S-diacylglycerol cysteine lipid modification.

Belongs to the FlgH family. The basal body constitutes a major portion of the flagellar organelle and consists of four rings (L,P,S, and M) mounted on a central rod.

The protein localises to the cell outer membrane. The protein resides in the bacterial flagellum basal body. In terms of biological role, assembles around the rod to form the L-ring and probably protects the motor/basal body from shearing forces during rotation. The chain is Flagellar L-ring protein from Sinorhizobium fredii (strain NBRC 101917 / NGR234).